Consider the following 694-residue polypeptide: Acetyl-coenzyme A synthetase (694 aa).

Positions 1–23 (MSDKRPRSPCSNNNDELNDSSVL) are disordered. The span at 9–23 (PCSNNNDELNDSSVL) shows a compositional bias: polar residues. CoA-binding positions include 229-232 (RGKK) and threonine 347. ATP-binding positions include 423 to 425 (GEP), 447 to 452 (DTYWQT), aspartate 536, and arginine 551. Position 559 (serine 559) interacts with CoA. Arginine 562 provides a ligand contact to ATP. Arginine 628 lines the CoA pocket.

This sequence belongs to the ATP-dependent AMP-binding enzyme family.

It catalyses the reaction acetate + ATP + CoA = acetyl-CoA + AMP + diphosphate. This chain is Acetyl-coenzyme A synthetase (ACS), found in Cryptosporidium parvum.